The primary structure comprises 347 residues: GMP reductase (347 aa).

108-131 contributes to the NADP(+) binding site; that stretch reads ADFEKTVQILALNPALNFVCIDVA. K(+)-binding residues include G181 and G183. C186 serves as the catalytic Thioimidate intermediate. Position 216–239 (216–239) interacts with NADP(+); the sequence is IVSDGGCTMPGDVAKAFGGGADFV.

This sequence belongs to the IMPDH/GMPR family. GuaC type 1 subfamily. As to quaternary structure, homotetramer.

It catalyses the reaction IMP + NH4(+) + NADP(+) = GMP + NADPH + 2 H(+). In terms of biological role, catalyzes the irreversible NADPH-dependent deamination of GMP to IMP. It functions in the conversion of nucleobase, nucleoside and nucleotide derivatives of G to A nucleotides, and in maintaining the intracellular balance of A and G nucleotides. The polypeptide is GMP reductase (Salmonella paratyphi A (strain ATCC 9150 / SARB42)).